Reading from the N-terminus, the 350-residue chain is Spermidine/putrescine import ATP-binding protein PotA (350 aa).

An ABC transporter domain is found at 6–236; the sequence is LELRNVTKDY…PENLWVAKFI (231 aa). 38–45 contacts ATP; the sequence is GPSGCGKT.

This sequence belongs to the ABC transporter superfamily. Spermidine/putrescine importer (TC 3.A.1.11.1) family. As to quaternary structure, the complex is composed of two ATP-binding proteins (PotA), two transmembrane proteins (PotB and PotC) and a solute-binding protein (PotD).

The protein localises to the cell membrane. It carries out the reaction ATP + H2O + polyamine-[polyamine-binding protein]Side 1 = ADP + phosphate + polyamineSide 2 + [polyamine-binding protein]Side 1.. In terms of biological role, part of the ABC transporter complex PotABCD involved in spermidine/putrescine import. Responsible for energy coupling to the transport system. In Mesoplasma florum (strain ATCC 33453 / NBRC 100688 / NCTC 11704 / L1) (Acholeplasma florum), this protein is Spermidine/putrescine import ATP-binding protein PotA.